The sequence spans 137 residues: Protein BNS1 (137 aa).

Its function is as follows. Component of the FEAR (CDC14 early anaphase release) network which promotes CDC14 release from the nucleolus during early anaphase and is required for the efficient segregation of telomeric and nucleolar regions. Although BNS1 can partially compensate for a lack of SPO12 function when overexpressed, it does not appear to play any role in controlling meiotic nuclear division. This Saccharomyces cerevisiae (strain ATCC 204508 / S288c) (Baker's yeast) protein is Protein BNS1 (BNS1).